The sequence spans 179 residues: Acireductone dioxygenase (179 aa).

Fe(2+) contacts are provided by His-88, His-90, Glu-94, and His-133. Ni(2+)-binding residues include His-88, His-90, Glu-94, and His-133.

Belongs to the acireductone dioxygenase (ARD) family. As to quaternary structure, monomer. Interacts with MMP14. Fe(2+) is required as a cofactor. It depends on Ni(2+) as a cofactor.

It localises to the cytoplasm. It is found in the nucleus. Its subcellular location is the cell membrane. It carries out the reaction 1,2-dihydroxy-5-(methylsulfanyl)pent-1-en-3-one + O2 = 4-methylsulfanyl-2-oxobutanoate + formate + 2 H(+). The enzyme catalyses 1,2-dihydroxy-5-(methylsulfanyl)pent-1-en-3-one + O2 = 3-(methylsulfanyl)propanoate + CO + formate + 2 H(+). The protein operates within amino-acid biosynthesis; L-methionine biosynthesis via salvage pathway; L-methionine from S-methyl-5-thio-alpha-D-ribose 1-phosphate: step 5/6. Functionally, catalyzes 2 different reactions between oxygen and the acireductone 1,2-dihydroxy-3-keto-5-methylthiopentene (DHK-MTPene) depending upon the metal bound in the active site. Fe-containing acireductone dioxygenase (Fe-ARD) produces formate and 2-keto-4-methylthiobutyrate (KMTB), the alpha-ketoacid precursor of methionine in the methionine recycle pathway. Ni-containing acireductone dioxygenase (Ni-ARD) produces methylthiopropionate, carbon monoxide and formate, and does not lie on the methionine recycle pathway. The polypeptide is Acireductone dioxygenase (adi1) (Xenopus laevis (African clawed frog)).